Here is a 73-residue protein sequence, read N- to C-terminus: UPF0346 protein SSP1318 (73 aa).

Belongs to the UPF0346 family.

The polypeptide is UPF0346 protein SSP1318 (Staphylococcus saprophyticus subsp. saprophyticus (strain ATCC 15305 / DSM 20229 / NCIMB 8711 / NCTC 7292 / S-41)).